We begin with the raw amino-acid sequence, 105 residues long: Membrane-stabilizing protein A (105 aa).

A helical transmembrane segment spans residues 1–21 (MQFYLILLAILYLIVSFISIF). Topologically, residues 22–29 (KMEVVFTR) are cytoplasmic. Residues 30–50 (ILRIIMGVLLLFVLALTTMSF) form a helical membrane-spanning segment. The Extracellular segment spans residues 51–55 (PKENW). The helical transmembrane segment at 56–76 (WVFIVLLLLVGNVEVTGFKML) threads the bilayer. Residues 77–84 (KKDLKGVN) are Cytoplasmic-facing. The chain crosses the membrane as a helical span at residues 85–105 (ILNLMSLFIFVIYFILTIVLF).

This sequence belongs to the MspA family.

The protein resides in the membrane. Its function is as follows. Plays a role in toxin production, resistance to host innate immune mechanisms, and iron homeostasis. The sequence is that of Membrane-stabilizing protein A from Staphylococcus aureus (strain NCTC 8325 / PS 47).